A 31-amino-acid polypeptide reads, in one-letter code: Photosystem II reaction center protein T (31 aa).

The helical transmembrane segment at 3–23 threads the bilayer; it reads SAAYILVLALALGVIFFAIAF.

It belongs to the PsbT family. In terms of assembly, PSII is composed of 1 copy each of membrane proteins PsbA, PsbB, PsbC, PsbD, PsbE, PsbF, PsbH, PsbI, PsbJ, PsbK, PsbL, PsbM, PsbT, PsbX, PsbY, PsbZ, Psb30/Ycf12, peripheral proteins PsbO, CyanoQ (PsbQ), PsbU, PsbV and a large number of cofactors. It forms dimeric complexes.

It localises to the cellular thylakoid membrane. In terms of biological role, found at the monomer-monomer interface of the photosystem II (PS II) dimer, plays a role in assembly and dimerization of PSII. PSII is a light-driven water plastoquinone oxidoreductase, using light energy to abstract electrons from H(2)O, generating a proton gradient subsequently used for ATP formation. In Trichodesmium erythraeum (strain IMS101), this protein is Photosystem II reaction center protein T.